Here is a 340-residue protein sequence, read N- to C-terminus: S-adenosylmethionine:tRNA ribosyltransferase-isomerase (340 aa).

Belongs to the QueA family. As to quaternary structure, monomer.

Its subcellular location is the cytoplasm. It carries out the reaction 7-aminomethyl-7-carbaguanosine(34) in tRNA + S-adenosyl-L-methionine = epoxyqueuosine(34) in tRNA + adenine + L-methionine + 2 H(+). It participates in tRNA modification; tRNA-queuosine biosynthesis. Transfers and isomerizes the ribose moiety from AdoMet to the 7-aminomethyl group of 7-deazaguanine (preQ1-tRNA) to give epoxyqueuosine (oQ-tRNA). The sequence is that of S-adenosylmethionine:tRNA ribosyltransferase-isomerase from Francisella tularensis subsp. tularensis (strain FSC 198).